A 185-amino-acid polypeptide reads, in one-letter code: MSPSLREGAQLRESKPAPCSFSIESILGLDQKKDCTTSVRPHRPWTDTCGDSEKGGNPPLHAPDLPSETSFPCPVDHPRPEERAPKYENYFSASETRSLKRELSWYRGRRPRTAFTQNQVEVLENVFRVNCYPGIDIREDLAQKLNLEEDRIQIWFQNRRAKMKRSRRESQFLMAKKPFNPDLLK.

The interval 32 to 69 (KKDCTTSVRPHRPWTDTCGDSEKGGNPPLHAPDLPSET) is disordered. Positions 108-167 (GRRPRTAFTQNQVEVLENVFRVNCYPGIDIREDLAQKLNLEEDRIQIWFQNRRAKMKRSR) form a DNA-binding region, homeobox.

This sequence belongs to the ANF homeobox family. Can form heterodimers with PROP1 in binding to DNA Interacts with TLE1. In terms of tissue distribution, high levels found in the embryonic liver, lower level expression seen in the viscera, amnion and yolk sac.

It localises to the nucleus. Its function is as follows. Required for the normal development of the forebrain, eyes and other anterior structures such as the olfactory placodes and pituitary gland. Possible transcriptional repressor. Binds to the palindromic PIII sequence, 5'-AGCTTGAGTCTAATTGAATTAACTGTAC-3'. HESX1 and PROP1 bind as heterodimers on this palindromic site, and, in vitro, HESX1 can antagonize PROP1 activation. This is Homeobox expressed in ES cells 1 (Hesx1) from Mus musculus (Mouse).